We begin with the raw amino-acid sequence, 167 residues long: NADH-quinone oxidoreductase subunit B (167 aa).

[4Fe-4S] cluster is bound by residues cysteine 40, cysteine 41, cysteine 105, and cysteine 135.

The protein belongs to the complex I 20 kDa subunit family. In terms of assembly, NDH-1 is composed of 14 different subunits. Subunits NuoB, C, D, E, F, and G constitute the peripheral sector of the complex. [4Fe-4S] cluster is required as a cofactor.

It localises to the cell inner membrane. The catalysed reaction is a quinone + NADH + 5 H(+)(in) = a quinol + NAD(+) + 4 H(+)(out). In terms of biological role, NDH-1 shuttles electrons from NADH, via FMN and iron-sulfur (Fe-S) centers, to quinones in the respiratory chain. The immediate electron acceptor for the enzyme in this species is believed to be ubiquinone. Couples the redox reaction to proton translocation (for every two electrons transferred, four hydrogen ions are translocated across the cytoplasmic membrane), and thus conserves the redox energy in a proton gradient. The polypeptide is NADH-quinone oxidoreductase subunit B (Magnetococcus marinus (strain ATCC BAA-1437 / JCM 17883 / MC-1)).